A 1040-amino-acid chain; its full sequence is Multidrug resistance protein MdtB (1040 aa).

The next 12 membrane-spanning stretches (helical) occupy residues 25-45 (LLMV…PVSA), 347-367 (LMMA…NIPA), 369-389 (IIPG…MVFL), 396-416 (LTLM…IVVI), 440-460 (IGFT…PLLF), 472-492 (FAIT…TLTP), 537-557 (WLTL…WVFI), 863-883 (LGST…VLGI), 888-908 (FIHP…ALLA), 911-931 (IAGS…IGIV), 968-988 (ILMT…STGV), and 998-1018 (IGMV…TPVI).

Belongs to the resistance-nodulation-cell division (RND) (TC 2.A.6) family. MdtB subfamily. Part of a tripartite efflux system composed of MdtA, MdtB and MdtC. MdtB forms a heteromultimer with MdtC.

Its subcellular location is the cell inner membrane. In terms of biological role, the MdtABC tripartite complex confers resistance against novobiocin and deoxycholate. The sequence is that of Multidrug resistance protein MdtB from Escherichia coli O127:H6 (strain E2348/69 / EPEC).